Here is a 390-residue protein sequence, read N- to C-terminus: Lipid-A-disaccharide synthase (390 aa).

The protein belongs to the LpxB family.

It carries out the reaction a lipid X + a UDP-2-N,3-O-bis[(3R)-3-hydroxyacyl]-alpha-D-glucosamine = a lipid A disaccharide + UDP + H(+). Its pathway is bacterial outer membrane biogenesis; LPS lipid A biosynthesis. In terms of biological role, condensation of UDP-2,3-diacylglucosamine and 2,3-diacylglucosamine-1-phosphate to form lipid A disaccharide, a precursor of lipid A, a phosphorylated glycolipid that anchors the lipopolysaccharide to the outer membrane of the cell. The protein is Lipid-A-disaccharide synthase of Paramagnetospirillum magneticum (strain ATCC 700264 / AMB-1) (Magnetospirillum magneticum).